A 191-amino-acid polypeptide reads, in one-letter code: Somatotropin (191 aa).

Residue His20 participates in Zn(2+) binding. Cys53 and Cys164 are joined by a disulfide. Glu173 serves as a coordination point for Zn(2+). A disulfide bridge links Cys181 with Cys189.

This sequence belongs to the somatotropin/prolactin family.

It is found in the secreted. Growth hormone plays an important role in growth control and is involved in the regulation of several anabolic processes. Implicated as an osmoregulatory substance important for seawater adaptation. This is Somatotropin (GH) from Chelonia mydas (Green sea-turtle).